Here is a 760-residue protein sequence, read N- to C-terminus: Sphingosine kinase B (760 aa).

The disordered stretch occupies residues 1–108; that stretch reads MENNNNEPAE…NNNNNEPVTS (108 aa). Residues 12 to 39 are compositionally biased toward basic and acidic residues; sequence VQEKGPKLKNDIDLNDQFKDEKEKKEEI. Positions 40 to 106 are enriched in low complexity; sequence SSSSIENKNN…NNNNNNNEPV (67 aa). In terms of domain architecture, DAGKc spans 247 to 383; it reads PKNRKIRILI…LDVCIVQQPT (137 aa). ATP-binding positions include 257 to 259 and threonine 288; that span reads NPK. Substrate is bound at residue 313 to 316; it reads SGDG. Aspartate 315 serves as the catalytic Proton donor/acceptor. ATP is bound by residues glutamate 320 and 345 to 347; that span reads GTG. Positions 394–438 are disordered; it reads TVTTTTTTTSPTSASPTITSANNNNNNNNNNNNNNNNNNNNNNNN. Aspartate 461 contacts substrate. Residues arginine 468 and arginine 474 each contribute to the ATP site. A disordered region spans residues 535-605; the sequence is DNDNNNKNKN…SSPRSDINMS (71 aa). Residues 549-597 are compositionally biased toward low complexity; the sequence is EINSTTSNNNNNNNTTTTSTSSSTSTSTSTSSLTATTTTAKSTNSLSSS. 734 to 736 lines the ATP pocket; sequence DGE.

It catalyses the reaction a sphingoid base + ATP = a sphingoid 1-phosphate + ADP + H(+). Inhibited by N,N,-dimethylsphingosine. Its function is as follows. Catalyzes the phosphorylation of sphingosine to form sphingosine-1-phosphate (S1P), which probably acts intracellularly as a second messenger perhaps by promoting cell proliferation. This Dictyostelium discoideum (Social amoeba) protein is Sphingosine kinase B (sgkB).